Reading from the N-terminus, the 206-residue chain is Uracil phosphoribosyltransferase (206 aa).

Residues arginine 76, arginine 101, and 128-136 (DPMLATGTT) contribute to the 5-phospho-alpha-D-ribose 1-diphosphate site. Uracil-binding positions include isoleucine 191 and 196-198 (GDA). Aspartate 197 serves as a coordination point for 5-phospho-alpha-D-ribose 1-diphosphate.

The protein belongs to the UPRTase family. The cofactor is Mg(2+).

The catalysed reaction is UMP + diphosphate = 5-phospho-alpha-D-ribose 1-diphosphate + uracil. It functions in the pathway pyrimidine metabolism; UMP biosynthesis via salvage pathway; UMP from uracil: step 1/1. Its activity is regulated as follows. Allosterically activated by GTP. Its function is as follows. Catalyzes the conversion of uracil and 5-phospho-alpha-D-ribose 1-diphosphate (PRPP) to UMP and diphosphate. In Mycoplasma genitalium (strain ATCC 33530 / DSM 19775 / NCTC 10195 / G37) (Mycoplasmoides genitalium), this protein is Uracil phosphoribosyltransferase.